We begin with the raw amino-acid sequence, 510 residues long: DNA-directed RNA polymerase I subunit RPA34 (510 aa).

An N-acetylmethionine modification is found at methionine 1. The interval 1-31 is disordered; it reads MEEPQAGDAARFSCPPNFTAKPPASESPRFS. Serine 27 carries the phosphoserine modification. Tyrosine 80 carries the post-translational modification Phosphotyrosine. Positions 120–143 are disordered; that stretch reads GPQQSLSGSPLQPIPASPPPQIPP. Phosphoserine is present on residues serine 128, serine 136, serine 172, and serine 205. Positions 131–143 are enriched in pro residues; that stretch reads QPIPASPPPQIPP. Positions 203–510 are disordered; it reads LGSPEMDVRK…KRKQQQQQPV (308 aa). Over residues 258-270 the composition is skewed to basic and acidic residues; it reads GKETFEPEDKTVK. A Glycyl lysine isopeptide (Lys-Gly) (interchain with G-Cter in SUMO1); alternate cross-link involves residue lysine 270. Lysine 270 participates in a covalent cross-link: Glycyl lysine isopeptide (Lys-Gly) (interchain with G-Cter in SUMO2); alternate. Serine 285 carries the post-translational modification Phosphoserine. A Phosphothreonine modification is found at threonine 287. Serine 309 carries the post-translational modification Phosphoserine. Residue lysine 314 forms a Glycyl lysine isopeptide (Lys-Gly) (interchain with G-Cter in SUMO1); alternate linkage. Residue lysine 314 forms a Glycyl lysine isopeptide (Lys-Gly) (interchain with G-Cter in SUMO2); alternate linkage. Composition is skewed to low complexity over residues 372 to 382 and 394 to 407; these read AKPQAQAALAA and DATV…VGPE. Residues 421–430 are compositionally biased toward basic residues; that stretch reads TKKKKKKKER. Residues 436 to 452 show a composition bias toward low complexity; it reads EPIQPLEPELPGEGQPE. Serine 490 carries the phosphoserine modification.

The protein belongs to the eukaryotic RPA34 RNA polymerase subunit family. As to quaternary structure, component of the RNA polymerase I (Pol I) complex consisting of 13 subunits: a ten-subunit catalytic core composed of POLR1A/RPA1, POLR1B/RPA2, POLR1C/RPAC1, POLR1D/RPAC2, POLR1H/RPA12, POLR2E/RPABC1, POLR2F/RPABC2, POLR2H/RPABC3, POLR2K/RPABC4 and POLR2L/RPABC5; a mobile stalk subunit POLR1F/RPA43 protruding from the core and additional subunits homologous to general transcription factors POLR1E/RPA49 and POLR1G/RPA34. Forms a heterodimer with POLR1E/RPA49. Part of Pol I pre-initiation complex (PIC), in which Pol I core assembles with RRN3 and promoter-bound UTBF and SL1/TIF-IB complex. Interacts with TAF1A thereby associates with the SL1/TIF-IB complex. Interacts with UBTF. Interacts with POLR1E/PRAF1 through its N-terminal region. In terms of assembly, interacts with CD3E. Undergoes tyrosine phosphorylation upon T-cell receptor (TCR) stimulation. This phosphorylation has not been confirmed by other groups. Post-translationally, phosphorylated on tyrosine residues in initiation-competent Pol I-beta complexes but not in Pol I-alpha complexes.

The protein localises to the nucleus. The protein resides in the nucleolus. It localises to the chromosome. Functionally, component of RNA polymerase I (Pol I), a DNA-dependent RNA polymerase which synthesizes ribosomal RNA precursors using the four ribonucleoside triphosphates as substrates. Involved in UBTF-activated transcription, presumably at a step following PIC formation. Has been described as a component of preformed T-cell receptor (TCR) complex. The sequence is that of DNA-directed RNA polymerase I subunit RPA34 from Homo sapiens (Human).